The primary structure comprises 131 residues: UPF0212 protein TK1194 (131 aa).

This sequence belongs to the UPF0212 family.

The chain is UPF0212 protein TK1194 from Thermococcus kodakarensis (strain ATCC BAA-918 / JCM 12380 / KOD1) (Pyrococcus kodakaraensis (strain KOD1)).